The following is a 259-amino-acid chain: Protein CDI (259 aa).

Residues 236–259 (FADLWLNEMEEYNKENKKEADNAK) adopt a coiled-coil conformation.

As to expression, mostly expressed in pollen grains and pollen tubes, and, at low levels, in seedlings, roots, stems, leaves, flowers and siliques.

Its subcellular location is the cytoplasm. The protein resides in the cytosol. Functionally, probable nucleotide-diphospho-sugar transferase required for pollen germination and tube growth. This is Protein CDI from Arabidopsis thaliana (Mouse-ear cress).